Consider the following 604-residue polypeptide: Acetylcholinesterase 4 (604 aa).

Residues 1–23 (MKPKLVFLPFLIFITVFIEESEA) form the signal peptide. Cys88 and Cys115 are oxidised to a cystine. Asn96 and Asn128 each carry an N-linked (GlcNAc...) asparagine glycan. Ser219 serves as the catalytic Acyl-ester intermediate. A disulfide bridge links Cys273 with Cys284. Residues Asn274 and Asn299 are each glycosylated (N-linked (GlcNAc...) asparagine). Glu347 acts as the Charge relay system in catalysis. 2 N-linked (GlcNAc...) asparagine glycosylation sites follow: Asn400 and Asn446. Cysteines 426 and 561 form a disulfide. The active-site Charge relay system is His477.

This sequence belongs to the type-B carboxylesterase/lipase family.

Its subcellular location is the synapse. It is found in the secreted. The protein localises to the cell membrane. It catalyses the reaction acetylcholine + H2O = choline + acetate + H(+). Rapidly hydrolyzes choline released into the synapse. This Caenorhabditis briggsae protein is Acetylcholinesterase 4 (ace-4).